Here is a 219-residue protein sequence, read N- to C-terminus: Small ribosomal subunit protein uS3c (219 aa).

In terms of domain architecture, KH type-2 spans 39 to 109 (IRQYIEKNLS…QIRINVIEVK (71 aa)).

Belongs to the universal ribosomal protein uS3 family. As to quaternary structure, part of the 30S ribosomal subunit.

The protein localises to the plastid. It localises to the cyanelle. The polypeptide is Small ribosomal subunit protein uS3c (rps3) (Cyanophora paradoxa).